Consider the following 200-residue polypeptide: Holliday junction branch migration complex subunit RuvA (200 aa).

Residues 1–64 (MIAKLKGLLD…ENDMRLLGFA (64 aa)) form a domain I region. The segment at 65 to 143 (EASERDWFRL…ALPSAPGGAA (79 aa)) is domain II. Positions 144–154 (MAANPAGGASA) are flexible linker. The tract at residues 154–200 (ADAVSALENLGFKPAIAARAVATAQGELGEGASESELIRVALKRAAG) is domain III.

The protein belongs to the RuvA family. Homotetramer. Forms an RuvA(8)-RuvB(12)-Holliday junction (HJ) complex. HJ DNA is sandwiched between 2 RuvA tetramers; dsDNA enters through RuvA and exits via RuvB. An RuvB hexamer assembles on each DNA strand where it exits the tetramer. Each RuvB hexamer is contacted by two RuvA subunits (via domain III) on 2 adjacent RuvB subunits; this complex drives branch migration. In the full resolvosome a probable DNA-RuvA(4)-RuvB(12)-RuvC(2) complex forms which resolves the HJ.

The protein localises to the cytoplasm. The RuvA-RuvB-RuvC complex processes Holliday junction (HJ) DNA during genetic recombination and DNA repair, while the RuvA-RuvB complex plays an important role in the rescue of blocked DNA replication forks via replication fork reversal (RFR). RuvA specifically binds to HJ cruciform DNA, conferring on it an open structure. The RuvB hexamer acts as an ATP-dependent pump, pulling dsDNA into and through the RuvAB complex. HJ branch migration allows RuvC to scan DNA until it finds its consensus sequence, where it cleaves and resolves the cruciform DNA. The chain is Holliday junction branch migration complex subunit RuvA from Erythrobacter litoralis (strain HTCC2594).